The sequence spans 256 residues: 1-(5-phosphoribosyl)-5-[(5-phosphoribosylamino)methylideneamino] imidazole-4-carboxamide isomerase (256 aa).

Asp-8 (proton acceptor) is an active-site residue. Asp-129 (proton donor) is an active-site residue.

It belongs to the HisA/HisF family.

Its subcellular location is the cytoplasm. The catalysed reaction is 1-(5-phospho-beta-D-ribosyl)-5-[(5-phospho-beta-D-ribosylamino)methylideneamino]imidazole-4-carboxamide = 5-[(5-phospho-1-deoxy-D-ribulos-1-ylimino)methylamino]-1-(5-phospho-beta-D-ribosyl)imidazole-4-carboxamide. The protein operates within amino-acid biosynthesis; L-histidine biosynthesis; L-histidine from 5-phospho-alpha-D-ribose 1-diphosphate: step 4/9. The polypeptide is 1-(5-phosphoribosyl)-5-[(5-phosphoribosylamino)methylideneamino] imidazole-4-carboxamide isomerase (Synechococcus sp. (strain CC9311)).